The following is a 198-amino-acid chain: Cyclin-dependent kinase inhibitor 1B (198 aa).

A compositionally biased stretch (polar residues) spans methionine 1–threonine 12. The segment at methionine 1–arginine 30 is disordered. Serine 10 bears the Phosphoserine; by UHMK1 mark. Residues serine 13–glutamate 22 show a composition bias toward basic and acidic residues. The interaction with CDK2 stretch occupies residues aspartate 51–proline 91. Tyrosine 74 is modified (phosphotyrosine; by SRC). The disordered stretch occupies residues phenylalanine 87 to threonine 198. A Phosphotyrosine; by ABL, LYN and SRC modification is found at tyrosine 88. Position 89 is a phosphotyrosine (tyrosine 89). Residues glutamine 104 to arginine 113 are compositionally biased toward polar residues. The span at glutamate 126–alanine 137 shows a compositional bias: basic and acidic residues. Residues lysine 153 to arginine 169 carry the Nuclear localization signal motif. Residue threonine 157 is modified to Phosphothreonine; by CaMK1, PKB/AKT1 and PIM1. Residue threonine 170 is modified to Phosphothreonine. The segment covering serine 175–glutamine 186 has biased composition (polar residues). A Phosphothreonine; by PKB/AKT1, CDK1 and CDK2 modification is found at threonine 187. Phosphothreonine; by CaMK1, PKB/AKT1, RPS6KA1, RPS6KA3 and PIM1 is present on threonine 198.

It belongs to the CDI family. In terms of assembly, forms a ternary complex composed of CCNE1, CDK2 and CDKN1B. Interacts directly with CCNE1; the interaction is inhibited by CDK2-dependent phosphorylation on Thr-187. Interacts with COPS5, subunit of the COP9 signalosome complex; the interaction leads to CDKN1B degradation. Interacts with NUP50; the interaction leads to nuclear import and degradation of phosphorylated CDKN1B. Interacts with CCND1 and SNX6. Interacts (Thr-198-phosphorylated form) with 14-3-3 proteins, binds strongly YWHAQ, weakly YWHAE and YWHAH, but not YWHAB nor YWHAZ; the interaction with YWHAQ results in translocation to the cytoplasm. Interacts with AKT1 and LYN; the interactions lead to cytoplasmic mislocation, phosphorylation of CDKN1B and inhibition of cell cycle arrest. Forms a ternary complex with CCNA2 and CDK2; CDKN1B inhibits the kinase activity of CDK2 through conformational rearrangements. Interacts (unphosphorylated form) with CDK2. Forms a complex with CDK2 and SPDYA, but does not directly interact with SPDYA. Forms a ternary complex composed of cyclin D, CDK4 and CDKN1B. Interacts (phosphorylated on Tyr-88 and Tyr-89) with CDK4; the interaction is required for cyclin D and CDK4 complex assembly, induces nuclear translocation and activates the CDK4 kinase activity. Interacts with GRB2. Interacts with PIM1. Identified in a complex with SKP1, SKP2 and CKS1B. Interacts with UHMK1; the interaction leads to cytoplasmic mislocation, phosphorylation of CDKN1B and inhibition of cell cycle arrest. Also interacts with CDK1. Dephosphorylated on Thr-187 by PPM1H, leading to CDKN1B stability. In terms of processing, phosphorylated; phosphorylation occurs on serine, threonine and tyrosine residues. Phosphorylation on Ser-10 is the major site of phosphorylation in resting cells, takes place at the G(0)-G(1) phase and leads to protein stability. Phosphorylation on other sites is greatly enhanced by mitogens, growth factors, cMYC and in certain cancer cell lines. The phosphorylated form found in the cytoplasm is inactivate. Phosphorylation on Thr-198 is required for interaction with 14-3-3 proteins. Phosphorylation on Thr-187, by CDK1 and CDK2 leads to protein ubiquitination and proteasomal degradation. Tyrosine phosphorylation promotes this process. Phosphorylation by PKB/AKT1 can be suppressed by LY294002, an inhibitor of the catalytic subunit of PI3K. Phosphorylation on Tyr-88 and Tyr-89 has no effect on binding CDK2, but is required for binding CDK4. Dephosphorylated on tyrosine residues by G-CSF. Dephosphorylated on Thr-187 by PPM1H, leading to CDKN1B stability. Post-translationally, ubiquitinated; in the cytoplasm by the KPC complex (composed of RNF123/KPC1 and UBAC1/KPC2) and, in the nucleus, by SCF(SKP2). The latter requires prior phosphorylation on Thr-187. Ubiquitinated; by a TRIM21-containing SCF(SKP2)-like complex; leads to its degradation. Subject to degradation in the lysosome. Interaction with SNX6 promotes lysosomal degradation.

The protein resides in the nucleus. It is found in the cytoplasm. It localises to the endosome. Important regulator of cell cycle progression. Inhibits the kinase activity of CDK2 bound to cyclin A, but has little inhibitory activity on CDK2 bound to SPDYA. Involved in G1 arrest. Potent inhibitor of cyclin E- and cyclin A-CDK2 complexes. Forms a complex with cyclin type D-CDK4 complexes and is involved in the assembly, stability, and modulation of CCND1-CDK4 complex activation. Acts either as an inhibitor or an activator of cyclin type D-CDK4 complexes depending on its phosphorylation state and/or stoichometry. This chain is Cyclin-dependent kinase inhibitor 1B (CDKN1B), found in Canis lupus familiaris (Dog).